A 616-amino-acid polypeptide reads, in one-letter code: Heme A synthase-mitochondrial ferredoxin fusion protein (616 aa).

The transit peptide at 1–45 directs the protein to the mitochondrion; it reads MNISRSSGLMRQFLLQPLRKGCDISCLGRSSWRMSRSFSGSSVLN. The segment at 45 to 465 is heme a synthase cox15-like; it reads NEINLSRTKN…AALSLAQRLH (421 aa). The Mitochondrial matrix segment spans residues 46-97; that stretch reads EINLSRTKNLFLNDCKFNKNSFEKFFARRLSNSVAPTPGGILQETEKIPSKK. A helical transmembrane segment spans residues 98–118; the sequence is VAFWLLGSSALVLAIVVVGGI. Residues 119–182 lie on the Mitochondrial intermembrane side of the membrane; sequence TRLTESGLSI…NIFFWEWFHR (64 aa). Histidine 181 contributes to the heme o binding site. The chain crosses the membrane as a helical span at residues 183 to 203; it reads VLGRGIGLTILLPSIYMIVTK. The Mitochondrial matrix segment spans residues 204–212; the sequence is RASPWLSKR. Residues 213–233 traverse the membrane as a helical segment; sequence LIGLTGLVGLQGVIGWWMVKS. Over 234-254 the chain is Mitochondrial intermembrane; the sequence is GLSEELFSDGSHPRVSHYRLA. A helical transmembrane segment spans residues 255 to 275; that stretch reads THLAAAVALYIGLVWTGHGIL. Histidine 256 contacts heme o. The Mitochondrial matrix segment spans residues 276–311; the sequence is QRHAFLKSMKSGSTSQLTSMVSSVQKMKGFRTSVNS. A helical membrane pass occupies residues 312–332; sequence FVGLVLITLLSGAFVAGLDAG. The Mitochondrial intermembrane portion of the chain corresponds to 333–380; sequence MIYCTFPEMGEGRLAPSKSELFDQRFCRKDDKSDLIWRNMIDNPSLVQ. A helical transmembrane segment spans residues 381 to 401; that stretch reads LEHRILAITTFVAACGLFIFS. Histidine 383 contacts heme b. The Mitochondrial matrix segment spans residues 402-417; the sequence is RAKRNILPKKIKTSIN. The chain crosses the membrane as a helical span at residues 418–438; the sequence is VVTGVVTAQATLGIMTLIYVV. Proline 439 is a topological domain (mitochondrial intermembrane). Residues 440–460 form a helical membrane-spanning segment; that stretch reads VPLAALHQAGSLVTLTAALSL. Histidine 446 is a binding site for heme b. Residues 461-616 lie on the Mitochondrial matrix side of the membrane; it reads AQRLHPEYAL…RNIRLERPKA (156 aa). The 2Fe-2S ferredoxin-type domain occupies 502-606; it reads FRPSFHSEIK…GIRVRIPAQT (105 aa). The tract at residues 516–616 is mitochondrial ferredoxin yah1-like; the sequence is GTGIKVFFVT…RNIRLERPKA (101 aa). [2Fe-2S] cluster-binding residues include cysteine 541, cysteine 547, cysteine 550, and cysteine 587.

This sequence in the N-terminal section; belongs to the COX15/CtaA family. Type 2 subfamily. The protein in the C-terminal section; belongs to the adrenodoxin/putidaredoxin family. Homodimer. Requires heme b as cofactor. The cofactor is [2Fe-2S] cluster. Post-translationally, the etp1 preprotein is cleaved into 2 chains after imort into mitochondria. The N-terminal chain containing a heme A synthase cox15-like domain etp1(cd) is a subunit of the membrane-embedded cytochrome c oxidase complex and functions in the respiratory chain. The C-terminal chain containing a ferredoxin yah1-like domain etp1(fd) is released and serves in the matrix as electron transfer protein.

The protein localises to the mitochondrion inner membrane. The protein resides in the mitochondrion matrix. It carries out the reaction Fe(II)-heme o + 2 A + H2O = Fe(II)-heme a + 2 AH2. The protein operates within porphyrin-containing compound metabolism; heme A biosynthesis; heme A from heme O: step 1/1. Its function is as follows. Catalyzes the second reaction in the biosynthesis of heme A, a prosthetic group of mitochondrial cytochrome c oxidase (CcO). Heme A is synthesized from heme B by two sequential enzymatic reactions catalyzed by heme O synthase (HOS) and heme A synthase (HAS). HAS catalyzes the conversion of heme O to heme A by two successive hydroxylations of the methyl group at C8, in a reaction that involves matrix ferredoxin and ferredoxin reductase. The first hydroxylation forms heme I, the second hydroxylation results in an unstable dihydroxymethyl group, which spontaneously dehydrates, resulting in the formyl group of heme A. Functionally, iron-sulfur protein that transfers electrons in a wide variety of metabolic reactions. Involved in heme A biosynthesis and in iron-sulfur cluster assembly. Transfers electrons from adrenodoxin reductase arh1 to heme A synthase etp1(cd), a heme protein that catalyzes the conversion of heme O to heme A. Required for the de novo synthesis of Fe-S clusters on iron sulfur cluster assembly protein isu1. Interact in its reduced state with isu1 to productively deliver electrons for Fe-S cluster synthesis. Essential for coenzyme Q biosynthesis. May transfer the electrons required for the hydroxylation reaction performed by coq6. This is Heme A synthase-mitochondrial ferredoxin fusion protein from Schizosaccharomyces pombe (strain 972 / ATCC 24843) (Fission yeast).